We begin with the raw amino-acid sequence, 89 residues long: Small ribosomal subunit protein uS15 (89 aa).

Belongs to the universal ribosomal protein uS15 family. In terms of assembly, part of the 30S ribosomal subunit. Forms a bridge to the 50S subunit in the 70S ribosome, contacting the 23S rRNA.

In terms of biological role, one of the primary rRNA binding proteins, it binds directly to 16S rRNA where it helps nucleate assembly of the platform of the 30S subunit by binding and bridging several RNA helices of the 16S rRNA. Functionally, forms an intersubunit bridge (bridge B4) with the 23S rRNA of the 50S subunit in the ribosome. In Rhizobium leguminosarum bv. trifolii (strain WSM2304), this protein is Small ribosomal subunit protein uS15.